The primary structure comprises 72 residues: MSLSIIDQLEEKIKQAVETIQLLQLEVEELKEKNNNLTQERDGLRQEHEQLKVEQQNFQERLRSLLGQIDNV.

Residues 3-71 adopt a coiled-coil conformation; that stretch reads LSIIDQLEEK…LRSLLGQIDN (69 aa).

It belongs to the ZapB family. Homodimer. The ends of the coiled-coil dimer bind to each other, forming polymers. Interacts with FtsZ.

The protein resides in the cytoplasm. In terms of biological role, non-essential, abundant cell division factor that is required for proper Z-ring formation. It is recruited early to the divisome by direct interaction with FtsZ, stimulating Z-ring assembly and thereby promoting cell division earlier in the cell cycle. Its recruitment to the Z-ring requires functional FtsA or ZipA. In Haemophilus ducreyi (strain 35000HP / ATCC 700724), this protein is Cell division protein ZapB.